We begin with the raw amino-acid sequence, 473 residues long: Glutamate--tRNA ligase (473 aa).

Residues 11–21 carry the 'HIGH' region motif; it reads PSPTGFLHIGG. Positions 240–244 match the 'KMSKS' region motif; it reads KLSKR. K243 contacts ATP.

The protein belongs to the class-I aminoacyl-tRNA synthetase family. Glutamate--tRNA ligase type 1 subfamily. As to quaternary structure, monomer.

It localises to the cytoplasm. It carries out the reaction tRNA(Glu) + L-glutamate + ATP = L-glutamyl-tRNA(Glu) + AMP + diphosphate. Its function is as follows. Catalyzes the attachment of glutamate to tRNA(Glu) in a two-step reaction: glutamate is first activated by ATP to form Glu-AMP and then transferred to the acceptor end of tRNA(Glu). The protein is Glutamate--tRNA ligase of Rhodopseudomonas palustris (strain TIE-1).